The sequence spans 421 residues: EGFR adapter protein (421 aa).

Disordered stretches follow at residues 18 to 94, 109 to 154, 173 to 194, and 372 to 396; these read TFIS…PQLQ, DVQE…RLVD, EDSR…SGCG, and PVPL…AGGT. Positions 21–30 are enriched in low complexity; that stretch reads SSSSASSSSS. Positions 62–89 are enriched in basic residues; that stretch reads FFHHHHPPAHPHPPRQQPHPHSHSHPHP. Over residues 109–120 the composition is skewed to basic and acidic residues; sequence DVQELSGQEHPH. Over residues 181–194 the composition is skewed to low complexity; sequence STCGSSLTSGSGCG. Positions 286–379 constitute an SH2 domain; it reads WFQAGIPREI…LLPVPLTLPR (94 aa).

In terms of assembly, may interact (via SH2 domain) with Egfr (when phosphorylated). In terms of tissue distribution, detected along the wing margin, with high levels of expression in two stripes of cells on either side of the dorsal/ventral boundary and lower levels of expression in a small region at the anteroposterior boundary (at protein level). High levels of expression along two parallel stripes of cells on either side of the wing pouch dorsal/ventral boundary, and slightly lower levels of expression in a region either side of the anteroposterior boundary. Also expressed in discrete regions of the wing imaginal disk outside of the pouch. Expressed in eye imaginal disk photoreceptors with highest levels of expression in R7 photoreceptor cells.

In terms of biological role, involved in the negative regulation of the Egfr/Ras signaling pathway. During wing morphogenesis, may function redundantly with PVRAP to inhibit Egfr activity and prevent uncontrolled cell growth. The polypeptide is EGFR adapter protein (Drosophila melanogaster (Fruit fly)).